The sequence spans 506 residues: Glycine--tRNA ligase (506 aa).

Substrate is bound by residues Arg-99 and Glu-189. Residues 221–223 (RNE), 231–236 (FRVREL), 306–307 (EI), and 365–368 (GVDR) contribute to the ATP site. 236 to 240 (LEQME) contacts substrate. 361–365 (EPSAG) serves as a coordination point for substrate.

The protein belongs to the class-II aminoacyl-tRNA synthetase family. In terms of assembly, homodimer.

Its subcellular location is the cytoplasm. It catalyses the reaction tRNA(Gly) + glycine + ATP = glycyl-tRNA(Gly) + AMP + diphosphate. Catalyzes the attachment of glycine to tRNA(Gly). This is Glycine--tRNA ligase from Deinococcus radiodurans (strain ATCC 13939 / DSM 20539 / JCM 16871 / CCUG 27074 / LMG 4051 / NBRC 15346 / NCIMB 9279 / VKM B-1422 / R1).